Reading from the N-terminus, the 213-residue chain is A-type ATP synthase subunit D (213 aa).

Belongs to the V-ATPase D subunit family. As to quaternary structure, has multiple subunits with at least A(3), B(3), C, D, E, F, H, I and proteolipid K(x).

It is found in the cell membrane. Functionally, component of the A-type ATP synthase that produces ATP from ADP in the presence of a proton gradient across the membrane. The protein is A-type ATP synthase subunit D of Saccharolobus islandicus (strain Y.N.15.51 / Yellowstone #2) (Sulfolobus islandicus).